The chain runs to 499 residues: Tyrosine-protein kinase Blk (499 aa).

Residues 1–34 (MGLLSSKRQVSEKGKGWSPVKIRTQDKAPPPLPP) form a disordered region. The N-myristoyl glycine moiety is linked to residue glycine 2. Residues 52 to 112 (EEERFVVALF…PSNFVAPVET (61 aa)) form the SH3 domain. The SH2 domain occupies 118 to 214 (WFFRTISRKD…GLCQKLTLPC (97 aa)). The 254-residue stretch at 235–488 (LKLVRKLGSG…FLQSVLEDFY (254 aa)) folds into the Protein kinase domain. ATP-binding positions include 241–249 (LGSGQFGEV) and lysine 263. Residue aspartate 354 is the Proton acceptor of the active site. Tyrosine 383 is subject to Phosphotyrosine; by autocatalysis.

It belongs to the protein kinase superfamily. Tyr protein kinase family. SRC subfamily. In terms of assembly, interacts with CBL (via SH2 domain). Interacts with CD79A and CD79B (via SH2 domain). Phosphorylated on tyrosine residues after antibody-mediated surface engagement of the B-cell antigen receptor (BCR). In terms of processing, ubiquitination of activated BLK by the UBE3A ubiquitin protein ligase leads to its degradation by the ubiquitin-proteasome pathway. As to expression, expressed in immature Vgamma2 gamma-delta T-cells (at protein level). Expressed in the B-cell lineage.

It localises to the cell membrane. It catalyses the reaction L-tyrosyl-[protein] + ATP = O-phospho-L-tyrosyl-[protein] + ADP + H(+). Its activity is regulated as follows. Antibody-mediated surface engagement of the B-cell antigen receptor (BCR) which results in the phosphorylation of BLK on tyrosine residues, stimulates the enzymatic activity. Functionally, non-receptor tyrosine kinase involved in B-lymphocyte development, differentiation and signaling. B-cell receptor (BCR) signaling requires a tight regulation of several protein tyrosine kinases and phosphatases, and associated coreceptors. Binding of antigen to the B-cell antigen receptor (BCR) triggers signaling that ultimately leads to B-cell activation. Signaling through BLK plays an important role in transmitting signals through surface immunoglobulins and supports the pro-B to pre-B transition, as well as the signaling for growth arrest and apoptosis downstream of B-cell receptor. Specifically binds and phosphorylates CD79A at 'Tyr-188'and 'Tyr-199', as well as CD79B at 'Tyr-196' and 'Tyr-207'. Also phosphorylates the immunoglobulin G receptor FCGR2. With FYN and LYN, plays an essential role in pre-B-cell receptor (pre-BCR)-mediated NF-kappa-B activation. Also contributes to BTK activation by indirectly stimulating BTK intramolecular autophosphorylation. In pancreatic islets, acts as a modulator of beta-cells function through the up-regulation of PDX1 and NKX6-1 and consequent stimulation of insulin secretion in response to glucose. Phosphorylates CGAS, promoting retention of CGAS in the cytosol. The polypeptide is Tyrosine-protein kinase Blk (Blk) (Mus musculus (Mouse)).